The primary structure comprises 353 residues: UPF0283 membrane protein YcjF (353 aa).

Basic and acidic residues predominate over residues 1 to 19 (MSEPLKPRIDFAEPLKEEP). The tract at residues 1–35 (MSEPLKPRIDFAEPLKEEPTSAFKAQQTFSEAESR) is disordered. Helical transmembrane passes span 70-90 (MVMG…VQWT), 100-120 (VALG…GSVV), and 213-233 (ESTL…FIAW).

This sequence belongs to the UPF0283 family.

It is found in the cell inner membrane. In Salmonella newport (strain SL254), this protein is UPF0283 membrane protein YcjF.